Here is a 446-residue protein sequence, read N- to C-terminus: 4-aminobutyrate aminotransferase (446 aa).

An N6-(pyridoxal phosphate)lysine modification is found at Lys-291.

Belongs to the class-III pyridoxal-phosphate-dependent aminotransferase family. It depends on pyridoxal 5'-phosphate as a cofactor.

The enzyme catalyses 4-aminobutanoate + 2-oxoglutarate = succinate semialdehyde + L-glutamate. It carries out the reaction (S)-3-amino-2-methylpropanoate + 2-oxoglutarate = 2-methyl-3-oxopropanoate + L-glutamate. It functions in the pathway amino-acid degradation; 4-aminobutanoate degradation. In Mycobacterium leprae (strain TN), this protein is 4-aminobutyrate aminotransferase (gabT).